A 142-amino-acid chain; its full sequence is Hemoglobin subunit alpha-2 (142 aa).

The Globin domain occupies 2-142 (VLSAADKSNV…VSTVLTSKYR (141 aa)). Position 59 (histidine 59) interacts with O2. Histidine 88 provides a ligand contact to heme b.

It belongs to the globin family. Heterotetramer of two alpha chains and two beta chains.

Involved in oxygen transport from the lung to the various peripheral tissues. Functionally, hemopressin acts as an antagonist peptide of the cannabinoid receptor CNR1. Hemopressin-binding efficiently blocks cannabinoid receptor CNR1 and subsequent signaling. This is Hemoglobin subunit alpha-2 (HBA2) from Capra hircus (Goat).